The primary structure comprises 376 residues: Thymidine kinase (376 aa).

The disordered stretch occupies residues 1–47; that stretch reads MASHAGQQHAPAFGQAARASGPTDGRAASRPSHRQGASEARGDPELP. 56-63 provides a ligand contact to ATP; it reads GPHGVGKT. Catalysis depends on E84, which acts as the Proton acceptor. Residues Y102 and Q126 each contribute to the substrate site. Residue R217 participates in ATP binding. R223 contacts substrate.

The protein belongs to the herpesviridae thymidine kinase family. In terms of assembly, homodimer.

It carries out the reaction thymidine + ATP = dTMP + ADP + H(+). Its function is as follows. Catalyzes the transfer of the gamma-phospho group of ATP to thymidine to generate dTMP in the salvage pathway of pyrimidine synthesis. The dTMP serves as a substrate for DNA polymerase during viral DNA replication. Allows the virus to be reactivated and to grow in non-proliferative cells lacking a high concentration of phosphorylated nucleic acid precursors. This chain is Thymidine kinase, found in Human herpesvirus 2 (strain 333) (HHV-2).